Consider the following 261-residue polypeptide: Triosephosphate isomerase (261 aa).

10-12 (NWK) provides a ligand contact to substrate. The Electrophile role is filled by His100. The Proton acceptor role is filled by Glu172. Substrate contacts are provided by residues Gly178, Ser218, and 239–240 (GG).

The protein belongs to the triosephosphate isomerase family. As to quaternary structure, homodimer.

It is found in the cytoplasm. It carries out the reaction D-glyceraldehyde 3-phosphate = dihydroxyacetone phosphate. Its pathway is carbohydrate biosynthesis; gluconeogenesis. It participates in carbohydrate degradation; glycolysis; D-glyceraldehyde 3-phosphate from glycerone phosphate: step 1/1. In terms of biological role, involved in the gluconeogenesis. Catalyzes stereospecifically the conversion of dihydroxyacetone phosphate (DHAP) to D-glyceraldehyde-3-phosphate (G3P). This Mycobacterium avium (strain 104) protein is Triosephosphate isomerase.